The primary structure comprises 620 residues: Extensin (620 aa).

The first 20 residues, Met-1–Ser-20, serve as a signal peptide directing secretion. Pro residues predominate over residues Leu-34–Ser-45. A disordered region spans residues Leu-34–Pro-620. One copy of the H-A-P-P repeat lies at His-70–Pro-73. Pro residues predominate over residues Asn-106–His-129. Over residues Ser-145–Pro-163 the composition is skewed to low complexity. One copy of the H-A-P-P repeat lies at His-148–Pro-151. Basic residues predominate over residues Pro-164 to His-177. Over residues Pro-178–Pro-219 the composition is skewed to pro residues. The contains the Ser-Pro(4) repeats stretch occupies residues Ser-205–Pro-620. Tandem repeats lie at residues Thr-229–Pro-235 and Thr-236–Pro-242. A compositionally biased stretch (basic residues) spans Thr-229–Pro-241. The 2 X 7 AA tandem repeats of T-H-R-H-A-P-P stretch occupies residues Thr-229 to Pro-242. Pro residues-rich tracts occupy residues His-251–Trp-552 and Gly-562–Tyr-613. A 3 X approximate tandem repeats region spans residues Pro-499–Ser-600.

Post-translationally, hydroxylated on proline residues in the S-P-P-P-P repeat. In terms of processing, O-glycosylated on hydroxyprolines. As to expression, expressed in the tip of the emerging lateral roots.

The protein resides in the secreted. The protein localises to the primary cell wall. Functionally, has a specialized structural function, possibly in the mechanical penetration of the cortex and epidermis of the main root. The sequence is that of Extensin (HRGPNT3) from Nicotiana tabacum (Common tobacco).